We begin with the raw amino-acid sequence, 727 residues long: Glucans biosynthesis glucosyltransferase H (727 aa).

Residues Ser18 to Thr45 form a disordered region. The next 7 membrane-spanning stretches (helical) occupy residues Phe58 to Val78, Leu90 to Ile110, Leu278 to Val298, Ile408 to Ala428, Leu460 to Leu480, Ile496 to Ile516, and Leu572 to Trp592.

This sequence belongs to the glycosyltransferase 2 family. OpgH subfamily.

Its subcellular location is the cell inner membrane. It functions in the pathway glycan metabolism; osmoregulated periplasmic glucan (OPG) biosynthesis. Involved in the biosynthesis of osmoregulated periplasmic glucans (OPGs). The chain is Glucans biosynthesis glucosyltransferase H from Shewanella putrefaciens (strain CN-32 / ATCC BAA-453).